We begin with the raw amino-acid sequence, 198 residues long: Putative manganese efflux pump MntP (198 aa).

Transmembrane regions (helical) follow at residues 3-23 (SIEL…VAIC), 37-57 (VLTG…GYLL), 65-85 (ITSI…INMI), 105-127 (SLTV…FAFL), 131-153 (IIPA…VKIG), and 171-191 (ILIG…SFVF).

This sequence belongs to the MntP (TC 9.B.29) family.

It localises to the cell membrane. Probably functions as a manganese efflux pump. The polypeptide is Putative manganese efflux pump MntP (Acetivibrio thermocellus (strain ATCC 27405 / DSM 1237 / JCM 9322 / NBRC 103400 / NCIMB 10682 / NRRL B-4536 / VPI 7372) (Clostridium thermocellum)).